The chain runs to 705 residues: Polyribonucleotide nucleotidyltransferase (705 aa).

2 residues coordinate Mg(2+): Asp486 and Asp492. The KH domain maps to 553 to 612; the sequence is PRIHTIRINPDKIKDVIGKGGSVIRALTEETGTTIEIEDDGTVKIAATDGEKAKFAIRRI. In terms of domain architecture, S1 motif spans 622–690; that stretch reads GRIYQGKVTR…RQGRVRLSIK (69 aa).

Belongs to the polyribonucleotide nucleotidyltransferase family. In terms of assembly, component of the RNA degradosome, which is a multiprotein complex involved in RNA processing and mRNA degradation. The cofactor is Mg(2+).

Its subcellular location is the cytoplasm. The catalysed reaction is RNA(n+1) + phosphate = RNA(n) + a ribonucleoside 5'-diphosphate. In terms of biological role, involved in mRNA degradation. Catalyzes the phosphorolysis of single-stranded polyribonucleotides processively in the 3'- to 5'-direction. This Serratia proteamaculans (strain 568) protein is Polyribonucleotide nucleotidyltransferase.